The primary structure comprises 352 residues: Glycerol-1-phosphate dehydrogenase [NAD(P)+] (352 aa).

NAD(+) contacts are provided by residues 99–103 (GAKID) and 121–124 (TAPS). Residue Asp126 coordinates substrate. NAD(+) is bound at residue Ser130. Substrate is bound at residue Asp173. Positions 173 and 253 each coordinate Zn(2+). His257 contacts substrate. Residue His269 participates in Zn(2+) binding.

This sequence belongs to the glycerol-1-phosphate dehydrogenase family. The cofactor is Zn(2+).

The protein localises to the cytoplasm. The catalysed reaction is sn-glycerol 1-phosphate + NAD(+) = dihydroxyacetone phosphate + NADH + H(+). It carries out the reaction sn-glycerol 1-phosphate + NADP(+) = dihydroxyacetone phosphate + NADPH + H(+). Its pathway is membrane lipid metabolism; glycerophospholipid metabolism. Functionally, catalyzes the NAD(P)H-dependent reduction of dihydroxyacetonephosphate (DHAP or glycerone phosphate) to glycerol 1-phosphate (G1P). The G1P thus generated is used as the glycerophosphate backbone of phospholipids in the cellular membranes of Archaea. This is Glycerol-1-phosphate dehydrogenase [NAD(P)+] from Thermoplasma acidophilum (strain ATCC 25905 / DSM 1728 / JCM 9062 / NBRC 15155 / AMRC-C165).